Reading from the N-terminus, the 1068-residue chain is Phosphatidylinositol 4,5-bisphosphate 3-kinase catalytic subunit alpha isoform (1068 aa).

Residues 16–105 (MPPRILVECL…QPFLKVIEPV (90 aa)) form the PI3K-ABD domain. The region spanning 187 to 289 (KGQIIVVIWV…GRMPNLMLMA (103 aa)) is the PI3K-RBD domain. The C2 PI3K-type domain occupies 330–487 (INSALRIKIL…DWFSSVVKFP (158 aa)). The PIK helical domain maps to 517 to 694 (LARDNELREN…GLLLESYCRA (178 aa)). The region spanning 765-1051 (RLEECRIMSS…QMNDAHHGGW (287 aa)) is the PI3K/PI4K catalytic domain. The tract at residues 771–777 (IMSSAKR) is G-loop. Positions 912–920 (GIGDRHNSN) are catalytic loop. The activation loop stretch occupies residues 931 to 957 (HIDFGHFLDHKKKKFGYKRERVPFVLT).

This sequence belongs to the PI3/PI4-kinase family. As to quaternary structure, heterodimer of a catalytic subunit PIK3CA and a p85 regulatory subunit (PIK3R1, PIK3R2 or PIK3R3). Interacts with IRS1 in nuclear extracts. Interacts with RUFY3. Interacts with RASD2. Interacts with APPL1. Interacts with HRAS and KRAS. Interaction with HRAS/KRAS is required for PI3K pathway signaling and cell proliferation stimulated by EGF and FGF2. Interacts with FAM83B; activates the PI3K/AKT signaling cascade.

The catalysed reaction is a 1,2-diacyl-sn-glycero-3-phospho-(1D-myo-inositol-4,5-bisphosphate) + ATP = a 1,2-diacyl-sn-glycero-3-phospho-(1D-myo-inositol-3,4,5-trisphosphate) + ADP + H(+). It catalyses the reaction a 1,2-diacyl-sn-glycero-3-phospho-(1D-myo-inositol) + ATP = a 1,2-diacyl-sn-glycero-3-phospho-(1D-myo-inositol-3-phosphate) + ADP + H(+). The enzyme catalyses L-seryl-[protein] + ATP = O-phospho-L-seryl-[protein] + ADP + H(+). It carries out the reaction 1,2-dioctanoyl-sn-glycero-3-phospho-(1D-myo-inositol-4,5-bisphosphate) + ATP = 1,2-dioctanoyl-sn-glycero-3-phospho-(1D-myo-inositol-3,4,5-trisphosphate) + ADP + H(+). The catalysed reaction is 1-octadecanoyl-2-(5Z,8Z,11Z,14Z)-eicosatetraenoyl-sn-glycero-3-phospho-1D-myo-inositol 4,5-bisphosphate + ATP = 1-octadecanoyl-2-(5Z,8Z,11Z,14Z-eicosatetraenoyl)-sn-glycero-3-phospho-(1D-myo-inositol 3,4,5-triphosphate) + ADP + H(+). It participates in phospholipid metabolism; phosphatidylinositol phosphate biosynthesis. In terms of biological role, phosphoinositide-3-kinase (PI3K) phosphorylates phosphatidylinositol (PI) and its phosphorylated derivatives at position 3 of the inositol ring to produce 3-phosphoinositides. Uses ATP and PtdIns(4,5)P2 (phosphatidylinositol 4,5-bisphosphate) to generate phosphatidylinositol 3,4,5-trisphosphate (PIP3). PIP3 plays a key role by recruiting PH domain-containing proteins to the membrane, including AKT1 and PDPK1, activating signaling cascades involved in cell growth, survival, proliferation, motility and morphology. Participates in cellular signaling in response to various growth factors. Involved in the activation of AKT1 upon stimulation by receptor tyrosine kinases ligands such as EGF, insulin, IGF1, VEGFA and PDGF. Involved in signaling via insulin-receptor substrate (IRS) proteins. Essential in endothelial cell migration during vascular development through VEGFA signaling, possibly by regulating RhoA activity. Required for lymphatic vasculature development, possibly by binding to RAS and by activation by EGF and FGF2, but not by PDGF. Regulates invadopodia formation through the PDPK1-AKT1 pathway. Participates in cardiomyogenesis in embryonic stem cells through a AKT1 pathway. Participates in vasculogenesis in embryonic stem cells through PDK1 and protein kinase C pathway. Also has serine-protein kinase activity: phosphorylates PIK3R1 (p85alpha regulatory subunit), EIF4EBP1 and HRAS. Plays a role in the positive regulation of phagocytosis and pinocytosis. The sequence is that of Phosphatidylinositol 4,5-bisphosphate 3-kinase catalytic subunit alpha isoform (Pik3ca) from Mus musculus (Mouse).